A 395-amino-acid chain; its full sequence is Elongation factor Tu (395 aa).

The 196-residue stretch at 10 to 205 (KVHMNVGTIG…TMDEYFKDPV (196 aa)) folds into the tr-type G domain. Residues 19-26 (GHVDHGKT) form a G1 region. GTP is bound at residue 19–26 (GHVDHGKT). A Mg(2+)-binding site is contributed by Thr26. The G2 stretch occupies residues 60-64 (GITIN). Positions 81–84 (DCPG) are G3. GTP contacts are provided by residues 81 to 85 (DCPGH) and 136 to 139 (NKVD). A G4 region spans residues 136–139 (NKVD). The tract at residues 173–175 (SAF) is G5.

The protein belongs to the TRAFAC class translation factor GTPase superfamily. Classic translation factor GTPase family. EF-Tu/EF-1A subfamily. Monomer.

The protein localises to the cytoplasm. The enzyme catalyses GTP + H2O = GDP + phosphate + H(+). GTP hydrolase that promotes the GTP-dependent binding of aminoacyl-tRNA to the A-site of ribosomes during protein biosynthesis. This is Elongation factor Tu from Treponema denticola (strain ATCC 35405 / DSM 14222 / CIP 103919 / JCM 8153 / KCTC 15104).